Reading from the N-terminus, the 624-residue chain is Carbon monoxide dehydrogenase (624 aa).

[4Fe-4S] cluster contacts are provided by Cys37, Cys46, Cys49, Cys54, and Cys65. The [Ni-4Fe-5S] cluster site is built by His256, Cys292, Cys336, Cys444, Cys475, and Cys516.

Belongs to the Ni-containing carbon monoxide dehydrogenase family. In terms of assembly, homodimer. [4Fe-4S] cluster is required as a cofactor. Requires [Ni-4Fe-5S] cluster as cofactor.

The enzyme catalyses CO + 2 oxidized [2Fe-2S]-[ferredoxin] + H2O = 2 reduced [2Fe-2S]-[ferredoxin] + CO2 + 2 H(+). CODH oxidizes carbon monoxide coupled, via CooF, to the reduction of a hydrogen cation by a hydrogenase (possibly CooH). The sequence is that of Carbon monoxide dehydrogenase (cooS) from Methanocaldococcus jannaschii (strain ATCC 43067 / DSM 2661 / JAL-1 / JCM 10045 / NBRC 100440) (Methanococcus jannaschii).